The following is a 949-amino-acid chain: Sensor histidine kinase RcsC (949 aa).

The Cytoplasmic segment spans residues 1-19 (MKYLASFRTTLKASRYMFR). A helical transmembrane segment spans residues 20 to 41 (ALALVLWLLIAFSSVFYIVNAL). At 42–313 (HQRESEIRQE…PVDKVLERIR (272 aa)) the chain is on the periplasmic side. The helical transmembrane segment at 314 to 335 (MVILNAILLNVLAGAALFTLAR) threads the bilayer. At 336–949 (MYERRIFIPA…AERVRKSRES (614 aa)) the chain is on the cytoplasmic side. The PAS domain maps to 357–425 (QFNRKIVASA…VLTSNNTNLQ (69 aa)). The region spanning 476–692 (TVSHELRTPL…QFTVRIPLYG (217 aa)) is the Histidine kinase domain. Position 479 is a phosphohistidine; by autocatalysis (histidine 479). Positions 705 to 805 (SGKRCWLAVR…ARIYLIEMES (101 aa)) constitute an ABL domain. The Response regulatory domain occupies 826 to 940 (MILVVDDHPI…VIKQTLTVYA (115 aa)). Aspartate 875 bears the 4-aspartylphosphate mark.

This sequence belongs to the RcsC family. As to quaternary structure, interacts with RcsD. Post-translationally, autophosphorylated. Activation probably requires a transfer of a phosphate group from a His in the transmitter domain to an Asp in the receiver domain.

It is found in the cell inner membrane. It catalyses the reaction ATP + protein L-histidine = ADP + protein N-phospho-L-histidine.. Its function is as follows. Component of the Rcs signaling system, which controls transcription of numerous genes. RcsC functions as a membrane-associated protein kinase that phosphorylates RcsD in response to environmental signals. The phosphoryl group is then transferred to the response regulator RcsB. Involved in regulation of K30 capsular polysaccharide synthesis. This Escherichia coli protein is Sensor histidine kinase RcsC.